The following is a 256-amino-acid chain: Ribosomal RNA large subunit methyltransferase E (256 aa).

S-adenosyl-L-methionine-binding residues include Gly-48, Trp-50, Asp-68, Asp-86, and Asp-111. The active-site Proton acceptor is the Lys-151. In terms of domain architecture, TRAM spans 198-256 (PVSPGDELDATVVDIGSEGDGIIKIDGYTLFVPGVENGDSVRVRVTDLKSNVGFAEVIE).

This sequence belongs to the class I-like SAM-binding methyltransferase superfamily. RNA methyltransferase RlmE family.

It is found in the cytoplasm. The enzyme catalyses uridine(2552) in 23S rRNA + S-adenosyl-L-methionine = 2'-O-methyluridine(2552) in 23S rRNA + S-adenosyl-L-homocysteine + H(+). In terms of biological role, specifically methylates the uridine in position 2552 of 23S rRNA at the 2'-O position of the ribose in the fully assembled 50S ribosomal subunit. The polypeptide is Ribosomal RNA large subunit methyltransferase E (Haloquadratum walsbyi (strain DSM 16790 / HBSQ001)).